We begin with the raw amino-acid sequence, 285 residues long: Bifunctional protein FolD (285 aa).

Residues 165 to 167 (GRS) and Ser190 contribute to the NADP(+) site.

The protein belongs to the tetrahydrofolate dehydrogenase/cyclohydrolase family. As to quaternary structure, homodimer.

The catalysed reaction is (6R)-5,10-methylene-5,6,7,8-tetrahydrofolate + NADP(+) = (6R)-5,10-methenyltetrahydrofolate + NADPH. The enzyme catalyses (6R)-5,10-methenyltetrahydrofolate + H2O = (6R)-10-formyltetrahydrofolate + H(+). It functions in the pathway one-carbon metabolism; tetrahydrofolate interconversion. Functionally, catalyzes the oxidation of 5,10-methylenetetrahydrofolate to 5,10-methenyltetrahydrofolate and then the hydrolysis of 5,10-methenyltetrahydrofolate to 10-formyltetrahydrofolate. The polypeptide is Bifunctional protein FolD (Burkholderia orbicola (strain AU 1054)).